Here is a 62-residue protein sequence, read N- to C-terminus: Potassium channel toxin kappa-KTx 1.4 (62 aa).

A signal peptide spans 1–26 (MKSCLINVSLLILLLLPILGYASVNA). Positions 27 to 38 (ESIDGENDFEEE) are excised as a propeptide. Cystine bridges form between Cys-43–Cys-61 and Cys-47–Cys-57.

Belongs to the short scorpion toxin superfamily. Potassium channel inhibitor kappa-KTx family. Kappa-KTx 1 subfamily. Expressed by the venom gland.

The protein resides in the secreted. Functionally, shows structural homology with WaTx suggesting that it acts as a cell-penetrating peptide (CPP) with defensive purpose that induces pain by specifically activating mammalian sensory neuron TRPA1 channels. Has no effect on the voltage-gated potassium channels tested. This is Potassium channel toxin kappa-KTx 1.4 from Heterometrus petersii (Asian forest scorpion).